We begin with the raw amino-acid sequence, 545 residues long: Chaperonin GroEL 2 (545 aa).

ATP-binding positions include 29 to 32 (TLGP), 86 to 90 (DGTTT), glycine 414, and aspartate 499.

This sequence belongs to the chaperonin (HSP60) family. Forms a cylinder of 14 subunits composed of two heptameric rings stacked back-to-back. Interacts with the co-chaperonin GroES.

The protein localises to the cytoplasm. The enzyme catalyses ATP + H2O + a folded polypeptide = ADP + phosphate + an unfolded polypeptide.. Its function is as follows. Together with its co-chaperonin GroES, plays an essential role in assisting protein folding. The GroEL-GroES system forms a nano-cage that allows encapsulation of the non-native substrate proteins and provides a physical environment optimized to promote and accelerate protein folding. The protein is Chaperonin GroEL 2 of Chloroflexus aurantiacus (strain ATCC 29366 / DSM 635 / J-10-fl).